Here is a 220-residue protein sequence, read N- to C-terminus: CASP-like protein 1E1 (220 aa).

At 1 to 57 (METPTPRVKPGFNGVGVGMGSSVNGSSRRAGYYMGPAGAVAVAGGGRAAAAAPVDGC) the chain is on the cytoplasmic side. A helical membrane pass occupies residues 58–78 (SVALRVFVLAATLVSAVVMGV). The Extracellular segment spans residues 79–108 (DRQTSTIRITVTDALPPLEVPLTANWSYSS). N-linked (GlcNAc...) asparagine glycosylation is present at N103. The helical transmembrane segment at 109–129 (AFVYFVVANAMVCLFSAAALA) threads the bilayer. Topologically, residues 130-144 (ACRSRAAMVPVMVGD) are cytoplasmic. The helical transmembrane segment at 145-165 (LLALALLYSAVGAAAEFGILG) threads the bilayer. Residues 166 to 187 (ERGNSHVRWPKVCNVYGRFCER) lie on the Extracellular side of the membrane. A helical membrane pass occupies residues 188–208 (AMAAVIVSLIAAFANLVLLML). Over 209–220 (NILTIHKSSSYY) the chain is Cytoplasmic.

The protein belongs to the Casparian strip membrane proteins (CASP) family. As to quaternary structure, homodimer and heterodimers.

It is found in the cell membrane. The chain is CASP-like protein 1E1 from Zea mays (Maize).